Consider the following 67-residue polypeptide: Protein DsrB (67 aa).

It belongs to the DsrB family.

The protein is Protein DsrB of Pectobacterium carotovorum subsp. carotovorum (strain PC1).